Consider the following 204-residue polypeptide: Holliday junction branch migration complex subunit RuvA (204 aa).

Positions 1 to 64 (MIGRLQGILL…EDAHLLFGFA (64 aa)) are domain I. The domain II stretch occupies residues 65–143 (QKTDRTLFRE…GVKQSDFFVE (79 aa)). Residues 144–155 (STHIPLSPSIES) are flexible linker. The domain III stretch occupies residues 156 to 204 (HSESSSDEAISALIALGYKPAEAEKMVKRVAKPELTSEQVIREALKAAL).

The protein belongs to the RuvA family. Homotetramer. Forms an RuvA(8)-RuvB(12)-Holliday junction (HJ) complex. HJ DNA is sandwiched between 2 RuvA tetramers; dsDNA enters through RuvA and exits via RuvB. An RuvB hexamer assembles on each DNA strand where it exits the tetramer. Each RuvB hexamer is contacted by two RuvA subunits (via domain III) on 2 adjacent RuvB subunits; this complex drives branch migration. In the full resolvosome a probable DNA-RuvA(4)-RuvB(12)-RuvC(2) complex forms which resolves the HJ.

The protein resides in the cytoplasm. In terms of biological role, the RuvA-RuvB-RuvC complex processes Holliday junction (HJ) DNA during genetic recombination and DNA repair, while the RuvA-RuvB complex plays an important role in the rescue of blocked DNA replication forks via replication fork reversal (RFR). RuvA specifically binds to HJ cruciform DNA, conferring on it an open structure. The RuvB hexamer acts as an ATP-dependent pump, pulling dsDNA into and through the RuvAB complex. HJ branch migration allows RuvC to scan DNA until it finds its consensus sequence, where it cleaves and resolves the cruciform DNA. The sequence is that of Holliday junction branch migration complex subunit RuvA from Haemophilus influenzae (strain PittGG).